Reading from the N-terminus, the 1154-residue chain is PAN2-PAN3 deadenylation complex catalytic subunit pan2 (1154 aa).

WD repeat units lie at residues 20 to 59 (GLPT…RYTS), 102 to 145 (THDE…DKLR), and 276 to 315 (ATVS…HFNE). The tract at residues 316-451 (MSKEVEFADV…GARISGESED (136 aa)) is linker. The region spanning 452 to 821 (DPLLKYSNVE…SPCVLAFQVR (370 aa)) is the USP domain. Positions 870-1048 (VALDTEFVDL…IEDARMALRL (179 aa)) constitute an Exonuclease domain. Residues Asp873, Glu875, Asp982, and Asp1041 each coordinate a divalent metal cation. A disordered region spans residues 1092-1154 (PGTAVTMQNN…GEFFTGSPLK (63 aa)). Composition is skewed to polar residues over residues 1096 to 1109 (VTMQ…TPST) and 1132 to 1141 (LTPSNGTFSG).

The protein belongs to the peptidase C19 family. PAN2 subfamily. Forms a heterotrimer with an asymmetric homodimer of the regulatory subunit pan3 to form the poly(A)-nuclease (PAN) deadenylation complex. A divalent metal cation is required as a cofactor.

The protein localises to the cytoplasm. The enzyme catalyses Exonucleolytic cleavage of poly(A) to 5'-AMP.. Its activity is regulated as follows. Positively regulated by the regulatory subunit pan3. In terms of biological role, catalytic subunit of the poly(A)-nuclease (PAN) deadenylation complex, one of two cytoplasmic mRNA deadenylases involved in mRNA turnover. PAN specifically shortens poly(A) tails of RNA and the activity is stimulated by poly(A)-binding protein pab1. PAN deadenylation is followed by rapid degradation of the shortened mRNA tails by the CCR4-NOT complex. Deadenylated mRNAs are then degraded by two alternative mechanisms, namely exosome-mediated 3'-5' exonucleolytic degradation, or deadenylation-dependent mRNA decaping and subsequent 5'-3' exonucleolytic degradation by xrn1. May also be involved in post-transcriptional maturation of mRNA poly(A) tails. The sequence is that of PAN2-PAN3 deadenylation complex catalytic subunit pan2 from Emericella nidulans (strain FGSC A4 / ATCC 38163 / CBS 112.46 / NRRL 194 / M139) (Aspergillus nidulans).